A 105-amino-acid chain; its full sequence is Urease subunit beta (105 aa).

This sequence belongs to the urease beta subunit family. As to quaternary structure, heterotrimer of UreA (gamma), UreB (beta) and UreC (alpha) subunits. Three heterotrimers associate to form the active enzyme.

The protein resides in the cytoplasm. It carries out the reaction urea + 2 H2O + H(+) = hydrogencarbonate + 2 NH4(+). It functions in the pathway nitrogen metabolism; urea degradation; CO(2) and NH(3) from urea (urease route): step 1/1. This chain is Urease subunit beta, found in Pseudomonas putida (strain ATCC 47054 / DSM 6125 / CFBP 8728 / NCIMB 11950 / KT2440).